The sequence spans 912 residues: Nonsense-mediated mRNA decay factor SMG8 (912 aa).

Positions 565 to 630 (EHSNRTPDAS…GEDEDETLEQ (66 aa)) are disordered. Residues 570 to 602 (TPDASTHPPMTNENSPHLSGSQKSQDSASNLTF) are compositionally biased toward polar residues. Positions 604-614 (MDEKRDEENKS) are enriched in basic and acidic residues.

It belongs to the SMG8 family.

Functionally, involved in nonsense-mediated decay (NMD) of mRNAs containing premature stop codons. Probable component of kinase complex containing SMG1 and recruited to stalled ribosomes. This is Nonsense-mediated mRNA decay factor SMG8 from Culex quinquefasciatus (Southern house mosquito).